Reading from the N-terminus, the 506-residue chain is MEMEDNWWVTKLKALESKPQRLDALTAMNSAIAKEAALPRQIIERLLTTDQLYDCANPAADSHVPKDQAVDVTLELLCHCLDQLAMDTADEQLSSLLRRGLTHSNPALRAQVLASLFKKLLRQLTVGQVLTLPNNELIFLILDELKQPDTQSTSLAINILSIVLPQRISNADVQAKLVQLLKQNEIVRCRAYELAVVLAKKSATLLSDVTFILDAALSELDNDDVLLQASVMELLVPLAEQNHGLSYMERRRVLDIISYRVQRVEEHPLDALLVPSIMKFFGKISVYQPLKIIGGYPHMLACLFMQLQSEDESILPTAMDTLANLATTPQGKILLNMHFSGAMEKSFKKYGSHTKKLSAHIKKRLLNSLDVIYDFKTPPATEIINIGKNWYECFAGGAHANIIMDLINTPFPDLQMAALSFLKTICKYNWGIVALKNTGGAVEFLLSRQKDLHRDIKYMKWQIMEILSASAEFSPTETIRFTAYVNEGPYHVQADLDVATEPQGNA.

It belongs to the proteasome subunit S5B/HSM3 family. As to quaternary structure, interacts with PI31; this interaction is increased by PI31 ADP-ribosylation. Interacts with Rpt2.

Functionally, acts as a chaperone during the assembly of the 26S proteasome. This chain is 26S proteasome non-ATPase regulatory subunit 5, found in Drosophila melanogaster (Fruit fly).